The following is a 132-amino-acid chain: D-ribose pyranase (132 aa).

His-20 acts as the Proton donor in catalysis. Residues Asp-28, His-99, and 121–123 contribute to the substrate site; that span reads YSN.

This sequence belongs to the RbsD / FucU family. RbsD subfamily. In terms of assembly, homodecamer.

It localises to the cytoplasm. It catalyses the reaction beta-D-ribopyranose = beta-D-ribofuranose. The protein operates within carbohydrate metabolism; D-ribose degradation; D-ribose 5-phosphate from beta-D-ribopyranose: step 1/2. In terms of biological role, catalyzes the interconversion of beta-pyran and beta-furan forms of D-ribose. The polypeptide is D-ribose pyranase (Lactococcus lactis subsp. lactis (strain IL1403) (Streptococcus lactis)).